We begin with the raw amino-acid sequence, 241 residues long: Triosephosphate isomerase (241 aa).

9–11 (NWK) provides a ligand contact to substrate. H96 serves as the catalytic Electrophile. E165 (proton acceptor) is an active-site residue. Substrate contacts are provided by residues G171, S204, and 225–226 (GG).

It belongs to the triosephosphate isomerase family. As to quaternary structure, homodimer.

Its subcellular location is the cytoplasm. The enzyme catalyses D-glyceraldehyde 3-phosphate = dihydroxyacetone phosphate. It functions in the pathway carbohydrate biosynthesis; gluconeogenesis. Its pathway is carbohydrate degradation; glycolysis; D-glyceraldehyde 3-phosphate from glycerone phosphate: step 1/1. In terms of biological role, involved in the gluconeogenesis. Catalyzes stereospecifically the conversion of dihydroxyacetone phosphate (DHAP) to D-glyceraldehyde-3-phosphate (G3P). The chain is Triosephosphate isomerase from Prochlorococcus marinus (strain MIT 9515).